We begin with the raw amino-acid sequence, 354 residues long: MTKHYLNSKYQSEQRSSAMKKITMGTASIILGSLVYIGADSQQVNAATEATNATNNQSTQVSQATSQPINFQVQKDGSSEKSHMDDYMQHPGKVIKQNNKYYFQAVLNNASFWKEYKFYNANNQELATTVVNDDKKADTRTINVAVEPGYKSLTTKVHIVVPQINYNHRYTTHLEFEKAIPTLADAAKPNNVKPVQPKPAQPKTPTEQTKPVQPKVEKVKPAVTAPSKNENRQTTKVVSSEATKDQSQTQSARTVKTTQTAQDQNKVQTPVKDVATAKSESNNQAVSDNKSQQTNKVTKQNEVHKQGPSKDSKAKELPKTGLTSVDNFISTVAFATLALLGSLSLLLFKRKESK.

A signal peptide spans 1-46; sequence MTKHYLNSKYQSEQRSSAMKKITMGTASIILGSLVYIGADSQQVNA. Residues 62–184 enclose the NEAT domain; it reads SQATSQPINF…EFEKAIPTLA (123 aa). Positions 75, 82, and 166 each coordinate heme. Positions 188 to 318 are disordered; it reads KPNNVKPVQP…SKDSKAKELP (131 aa). Over residues 203–214 the composition is skewed to low complexity; that stretch reads KTPTEQTKPVQP. Composition is skewed to polar residues over residues 226–268 and 278–298; these read PSKN…NKVQ and KSES…NKVT. A compositionally biased stretch (basic and acidic residues) spans 299–318; it reads KQNEVHKQGPSKDSKAKELP. The LPXTG sorting signal signature appears at 317–321; sequence LPKTG. Thr-320 is modified (pentaglycyl murein peptidoglycan amidated threonine). Residues 321 to 354 constitute a propeptide, removed by sortase A; sequence GLTSVDNFISTVAFATLALLGSLSLLLFKRKESK.

Belongs to the IsdA family. As to quaternary structure, monomer. Interacts with IsdC. Interacts with IsdB.

Its subcellular location is the secreted. The protein localises to the cell wall. Functionally, cell wall-anchored surface receptor that participates in the extraction of heme from oxidized methemoglobin/metHb to enable growth on hemoglobin as a sole iron source. Receives heme from IsdB and transfers it to IsdC. Also plays a role in the inhibition of host immune response. Protects S.aureus against the bactericidal protease activity of apolactoferrin. Decreases bacterial cellular hydrophobicity, which renders S.aureus resistant to bactericidal human skin fatty acids as well as to beta-defensins and cathelicidin. Also binds fibronectin and chains B-beta and gamma of fibrinogen, promoting clumping of S.aureus with fibrinogen. Involved in adherence of S.aureus to human desquamated nasal epithelial cells and is required for nasal colonization. The sequence is that of Iron-regulated surface determinant protein A (isdA) from Staphylococcus aureus (strain MRSA252).